A 376-amino-acid polypeptide reads, in one-letter code: MHLLKVGTWRNNTASSWLMKFSVLWLVSQNCCRASVVWMAYMNISFHVGNHVLSELGETGVFGRSSTLKRVAGVIVPPEGKIQNACNPNTIFSRSKYSETWLALIERGGCTFTQKIKVATEKGASGVIIYNVPGTGNQVFPMFHQAFEDVVVVMIGNLKGTEIFHLIKKGVLITAVVEVGRKHIIWMNHYLVSFVIVTTATLAYFIFYHIHRLCLARIQNRRWQRLTTDLQNTFGQLQLRVVKEGDEEINPNGDSCVICFERYKPNDIVRILTCKHFFHKNCIDPWILPHGTCPICKCDILKVLGIQVVVENGTEPLQVLMSNELPETLSPSEEETNNEVSPAGTSDKVIHVEENPTSQNNDIQPHSVVEDVHPSP.

The PA domain occupies 65-167 (SSTLKRVAGV…LKGTEIFHLI (103 aa)). The chain crosses the membrane as a helical span at residues 190–210 (YLVSFVIVTTATLAYFIFYHI). An RING-type; atypical zinc finger spans residues 256 to 297 (CVICFERYKPNDIVRILTCKHFFHKNCIDPWILPHGTCPICK). The segment at 327–376 (ETLSPSEEETNNEVSPAGTSDKVIHVEENPTSQNNDIQPHSVVEDVHPSP) is disordered. Residues 355 to 364 (NPTSQNNDIQ) show a composition bias toward polar residues.

In terms of assembly, interacts with E3 ligase UBE2J1. In terms of processing, auto-ubiquitinated. As to expression, expression is testis-specific.

It localises to the endoplasmic reticulum membrane. It carries out the reaction S-ubiquitinyl-[E2 ubiquitin-conjugating enzyme]-L-cysteine + [acceptor protein]-L-lysine = [E2 ubiquitin-conjugating enzyme]-L-cysteine + N(6)-ubiquitinyl-[acceptor protein]-L-lysine.. Its pathway is protein modification; protein ubiquitination. Functionally, has E3 ubiquitin-protein ligase activity. Plays a role in male fecundity through the interaction with the E2 ubituitin-protein ligase UBE2J1. In Homo sapiens (Human), this protein is E3 ubiquitin-protein ligase RNF133.